A 123-amino-acid polypeptide reads, in one-letter code: Putative oocyte-secreted protein 1 homolog (123 aa).

A signal peptide spans 1-26 (MKTILGFKGLFYLHSLIWTCAGDWSA).

The protein belongs to the PLAC1 family.

The protein localises to the secreted. Functionally, may be involved in cell differentiation. This chain is Putative oocyte-secreted protein 1 homolog (OOSP1), found in Homo sapiens (Human).